Consider the following 483-residue polypeptide: Zinc metalloproteinase/disintegrin VMP-II (483 aa).

The N-terminal stretch at 1–20 (MIQVLLVTLCLAAFPYQGNS) is a signal peptide. A propeptide spanning residues 21–191 (IILESGNVND…KASQLNLTPE (171 aa)) is cleaved from the precursor. One can recognise a Peptidase M12B domain in the interval 198–394 (RYIELVVVAD…HNPQCMLNEP (197 aa)). The Ca(2+) site is built by E201 and D285. Cystine bridges form between C309/C389, C349/C373, and C351/C356. Position 334 (H334) interacts with Zn(2+). E335 is an active-site residue. The Zn(2+) site is built by H338 and H344. Positions 389 and 392 each coordinate Ca(2+). A propeptide spanning residues 395–414 (LRTDIVSTPVSGNELWETGE) is cleaved from the precursor. In terms of domain architecture, Disintegrin spans 402-483 (TPVSGNELWE…AGCPRNPFHA (82 aa)). 4 disulfides stabilise this stretch: C425–C448, C439–C445, C444–C469, and C457–C476. Residues 461 to 463 (KGD) carry the Cell attachment site; atypical (KGD) motif.

The protein belongs to the venom metalloproteinase (M12B) family. P-II subfamily. P-IIe sub-subfamily. Heterodimer; disulfide-linked (disintegrin). The cofactor is Zn(2+). Expressed by the venom gland.

The protein resides in the secreted. Its activity is regulated as follows. Inhibited by EDTA and 1,10-phenanthroline, but not by PMSF. Functionally, has fibrinolytic activity. The recombinant enzyme cleaves both alpha- (FGA) and beta-chains (FGB) of fibrinogen, but not the gamma-chain. The recombinant protein does not produce hemorrhage in mice and does not have effect on ADP- or collagen-stimulated platelet aggregation. Inhibits platelet aggregation induced by ADP, thrombin, platelet-activating factor and collagen. Acts by inhibiting fibrinogen interaction with platelet receptors GPIIb/GPIIIa (ITGA2B/ITGB3). This Agkistrodon piscivorus leucostoma (Western cottonmouth) protein is Zinc metalloproteinase/disintegrin VMP-II.